Here is a 151-residue protein sequence, read N- to C-terminus: UPF0178 protein PSHAb0045 (151 aa).

It belongs to the UPF0178 family.

The chain is UPF0178 protein PSHAb0045 from Pseudoalteromonas translucida (strain TAC 125).